The following is a 395-amino-acid chain: Acetate kinase (395 aa).

Mg(2+) is bound at residue N7. K14 is a binding site for ATP. R90 contributes to the substrate binding site. The Proton donor/acceptor role is filled by D147. Residues 207-211 (HLGNG), 282-284 (DFR), and 330-334 (GLGEN) each bind ATP. E383 provides a ligand contact to Mg(2+).

The protein belongs to the acetokinase family. In terms of assembly, homodimer. It depends on Mg(2+) as a cofactor. Requires Mn(2+) as cofactor.

It is found in the cytoplasm. The enzyme catalyses acetate + ATP = acetyl phosphate + ADP. It participates in metabolic intermediate biosynthesis; acetyl-CoA biosynthesis; acetyl-CoA from acetate: step 1/2. Its function is as follows. Catalyzes the formation of acetyl phosphate from acetate and ATP. Can also catalyze the reverse reaction. The protein is Acetate kinase of Lachnoclostridium phytofermentans (strain ATCC 700394 / DSM 18823 / ISDg) (Clostridium phytofermentans).